A 502-amino-acid polypeptide reads, in one-letter code: Zinc finger C3HC-type protein 1 (502 aa).

Residue Ala2 is modified to N-acetylalanine. A Phosphoserine modification is found at Ser24. Residue Thr28 is modified to Phosphothreonine. The segment at 35–74 is disordered; the sequence is LIDEGIAPEEGGVDAQDTSATSQSVNGSPQAEQPSLESTS. A compositionally biased stretch (polar residues) spans 50–72; sequence QDTSATSQSVNGSPQAEQPSLES. Phosphoserine is present on residues Ser58 and Ser62. At Thr84 the chain carries Phosphothreonine. A C3HC-type zinc finger spans residues 102–156; that stretch reads CAKYGWVTVECDMLKCSSCQAFLCASLQPAFDFDRYKQRCAELKKALCTAHEKFC. Residues 302–423 form a disordered region; it reads SSPIPGLEGR…SSRSFFDPTS (122 aa). A phosphoserine mark is found at Ser321 and Ser329. Position 333 is a phosphothreonine (Thr333). 5 positions are modified to phosphoserine: Ser338, Ser344, Ser354, Ser359, and Ser370. A compositionally biased stretch (polar residues) spans 351–360; that stretch reads RTRSWDSSSP. Over residues 371–380 the composition is skewed to low complexity; it reads PTTRTRPVTR. Ser381 bears the Phosphoserine mark. Thr384 carries the phosphothreonine modification. At Ser395 the chain carries Phosphoserine. Positions 396-402 match the Nuclear localization signal motif; the sequence is PLRKAKR. Phosphoserine is present on residues Ser407 and Ser483. Positions 407-422 are enriched in low complexity; it reads SSSSSDTSSRSFFDPT.

Interacts with TPR; this interaction mediates ZC3HC1 nuclear envelopes (NE)-association but also required for proper positioning of a substantial amount of TPR at the nuclear basket (NB). Post-translationally, phosphorylated. May also be weakly phosphorylated on Tyr residues.

It is found in the nucleus. It localises to the nucleus envelope. Its function is as follows. Required for proper positioning of a substantial amount of TPR at the nuclear basket (NB) through interaction with TPR. The polypeptide is Zinc finger C3HC-type protein 1 (ZC3HC1) (Pongo abelii (Sumatran orangutan)).